The sequence spans 347 residues: sn-1 oleoyl-lipid 12-desaturase (347 aa).

Helical transmembrane passes span 41–63 (AWSR…AIAP) and 67–85 (LLPV…FVIG). Residues 86–90 (HDCGH) carry the Histidine box-1 motif. A helical transmembrane segment spans residues 98-118 (WVNNLVGHLAFLPLIYPFHSW). The short motif at 122–126 (HNHHH) is the Histidine box-2 element. 3 consecutive transmembrane segments (helical) span residues 164–184 (LWWL…FAFE), 196–216 (LFVI…LGVW), and 218–238 (VVKF…TFTL). The Histidine box-3 motif lies at 286 to 290 (HHLST).

Belongs to the fatty acid desaturase type 2 family. It depends on Fe(2+) as a cofactor.

It localises to the membrane. The catalysed reaction is a 1-[(9Z)-octadecenoyl]-2-acyl-glycerolipid + 2 reduced [2Fe-2S]-[ferredoxin] + O2 + 2 H(+) = a 1-[(9Z,12Z)-octadecdienoyl]-2-acyl-glycerolipid + 2 oxidized [2Fe-2S]-[ferredoxin] + 2 H2O. It functions in the pathway lipid metabolism; polyunsaturated fatty acid biosynthesis. Its function is as follows. Desaturase involved in fatty acid biosynthesis. Introduces a double bond at carbon 12 of oleoyl groups (18:1) attached to the sn-1 position of the glycerol moiety of membrane glycerolipids. Can also efficiently catalyze the desaturation of palmitoleic acid (16:1) in vitro. This Picosynechococcus sp. (strain ATCC 27264 / PCC 7002 / PR-6) (Agmenellum quadruplicatum) protein is sn-1 oleoyl-lipid 12-desaturase.